A 1067-amino-acid polypeptide reads, in one-letter code: Isoleucine--tRNA ligase (1067 aa).

Positions 49–59 (PYVSGAIHLGT) match the 'HIGH' region motif. Residues 625–629 (KMSKS) carry the 'KMSKS' region motif. Lys-628 serves as a coordination point for ATP.

It belongs to the class-I aminoacyl-tRNA synthetase family. IleS type 2 subfamily. Monomer. The cofactor is Zn(2+).

The protein localises to the cytoplasm. The enzyme catalyses tRNA(Ile) + L-isoleucine + ATP = L-isoleucyl-tRNA(Ile) + AMP + diphosphate. Functionally, catalyzes the attachment of isoleucine to tRNA(Ile). As IleRS can inadvertently accommodate and process structurally similar amino acids such as valine, to avoid such errors it has two additional distinct tRNA(Ile)-dependent editing activities. One activity is designated as 'pretransfer' editing and involves the hydrolysis of activated Val-AMP. The other activity is designated 'posttransfer' editing and involves deacylation of mischarged Val-tRNA(Ile). The sequence is that of Isoleucine--tRNA ligase from Pyrococcus abyssi (strain GE5 / Orsay).